A 179-amino-acid chain; its full sequence is Large ribosomal subunit protein uL5 (179 aa).

It belongs to the universal ribosomal protein uL5 family. In terms of assembly, part of the 50S ribosomal subunit; part of the 5S rRNA/L5/L18/L25 subcomplex. Contacts the 5S rRNA and the P site tRNA. Forms a bridge to the 30S subunit in the 70S ribosome.

In terms of biological role, this is one of the proteins that bind and probably mediate the attachment of the 5S RNA into the large ribosomal subunit, where it forms part of the central protuberance. In the 70S ribosome it contacts protein S13 of the 30S subunit (bridge B1b), connecting the 2 subunits; this bridge is implicated in subunit movement. Contacts the P site tRNA; the 5S rRNA and some of its associated proteins might help stabilize positioning of ribosome-bound tRNAs. The sequence is that of Large ribosomal subunit protein uL5 from Desulfatibacillum aliphaticivorans.